Reading from the N-terminus, the 752-residue chain is MLSLQEFVQNRYNKTIAECSNEELYLALLNYSKLASSQKPVNTGKKKVYYISAEFLIGKLLSNNLINLGLYDDVKKELAAAGKDLIEVEEVELEPSLGNGGLGRLAACFIDSIATLGLNGDGVGLNYHFGLFQQVLKNNQQETIPNAWLTEQNWLVRSSRSYQVPFADFTLTSTLYDIDVTGYETATKNRLRLFDLDSVDSSIIKDGINFDKTDIARNLTLFLYPDDSDRQGELLRIFQQYFMVSNGAQLIIDEAIEKGSNLHDLADYAVVQINDTHPSMVIPELIRLLTARGIDLDEAISIVRSMTAYTNHTILAEALEKWPLEFLQEVVPHLVPIIEELDRRVKAEYKDPAVQIIDESGRVHMAHMDIHYGYSVNGVAALHTEILKNSELKAFYDLYPEKFNNKTNGITFRRWLMHANPRLSHYLDEILGDGWHHEADELEKLLSYEDKAVVKEKLESIKAHNKRKLARHLKEHQGVEINPNSIFDIQIKRLHEYKRQQMNALYVIHKYLDIKAGNIPARPITIFFGGKAAPAYTIAQDIIHLILCMSEVIANDPAVAPHLQVVMVENYNVTAASFLIPACDISEQISLASKEASGTGNMKFMLNGALTLGTMDGANVEIAELVGEENIYIFGEDSETVIDLYAKAAYKSSEFYAREAIKPLVDFIVSDAVLAAGNKERLERFYNELINKDWFMTLLDLEDYIKVKEQMLADYEDRDAWLDKVIVNISKAGFFSSDRTIAQYNEDIWHLN.

An N6-(pyridoxal phosphate)lysine modification is found at lysine 603.

Belongs to the glycogen phosphorylase family. Requires pyridoxal 5'-phosphate as cofactor.

It carries out the reaction [(1-&gt;4)-alpha-D-glucosyl](n) + phosphate = [(1-&gt;4)-alpha-D-glucosyl](n-1) + alpha-D-glucose 1-phosphate. Functionally, phosphorylase is an important allosteric enzyme in carbohydrate metabolism. Enzymes from different sources differ in their regulatory mechanisms and in their natural substrates. However, all known phosphorylases share catalytic and structural properties. The sequence is that of Maltodextrin phosphorylase (malP) from Streptococcus pneumoniae serotype 4 (strain ATCC BAA-334 / TIGR4).